The chain runs to 121 residues: Small ribosomal subunit protein uS13 (121 aa).

The disordered stretch occupies residues 91–121 (HKRGLPVRGQRTRTNARTRKGPRRAAASLKK).

It belongs to the universal ribosomal protein uS13 family. As to quaternary structure, part of the 30S ribosomal subunit. Forms a loose heterodimer with protein S19. Forms two bridges to the 50S subunit in the 70S ribosome.

In terms of biological role, located at the top of the head of the 30S subunit, it contacts several helices of the 16S rRNA. In the 70S ribosome it contacts the 23S rRNA (bridge B1a) and protein L5 of the 50S subunit (bridge B1b), connecting the 2 subunits; these bridges are implicated in subunit movement. Contacts the tRNAs in the A and P-sites. This Bordetella petrii (strain ATCC BAA-461 / DSM 12804 / CCUG 43448) protein is Small ribosomal subunit protein uS13.